A 181-amino-acid chain; its full sequence is Adenine phosphoribosyltransferase (181 aa).

Belongs to the purine/pyrimidine phosphoribosyltransferase family. Homodimer.

The protein resides in the cytoplasm. It carries out the reaction AMP + diphosphate = 5-phospho-alpha-D-ribose 1-diphosphate + adenine. Its pathway is purine metabolism; AMP biosynthesis via salvage pathway; AMP from adenine: step 1/1. Its function is as follows. Catalyzes a salvage reaction resulting in the formation of AMP, that is energically less costly than de novo synthesis. This is Adenine phosphoribosyltransferase from Rhizobium leguminosarum bv. trifolii (strain WSM2304).